The chain runs to 217 residues: 7-cyano-7-deazaguanine synthase (217 aa).

Residue 10 to 20 (FSGGQDSTTCL) coordinates ATP. Zn(2+) contacts are provided by Cys-185, Cys-194, Cys-197, and Cys-200.

Belongs to the QueC family. Homodimer. The cofactor is Zn(2+).

It catalyses the reaction 7-carboxy-7-deazaguanine + NH4(+) + ATP = 7-cyano-7-deazaguanine + ADP + phosphate + H2O + H(+). It functions in the pathway purine metabolism; 7-cyano-7-deazaguanine biosynthesis. Its function is as follows. Catalyzes the ATP-dependent conversion of 7-carboxy-7-deazaguanine (CDG) to 7-cyano-7-deazaguanine (preQ(0)). The protein is 7-cyano-7-deazaguanine synthase of Streptococcus thermophilus (strain CNRZ 1066).